Reading from the N-terminus, the 511-residue chain is MKKRALVSVSDKTGVVEFVKGLLEQGIEVISTGGTKKLLEENGLQVIGISEVTGFPEIMDGRVKTLHPNIHGGLLAVRDNETHVTQMNELGIEPIDFVVVNLYPFKETIAKPDVTFADAIENIDIGGPTMIRSAAKNHKFVSVIVDPVDYDIVLAELKENGEVAEETKRKLAAKVFRHTAAYDALISNYLTEQMGEESPETLTVTFEKKQDLRYGENPHQKATFYKAPFAATSSVAYAEQLHGKELSYNNINDADAALSIVKEFTEPAVVAVKHMNPCGVGVGTNIHEAYTRAYEADPVSIFGGIIAANREIDKATAEKLHEIFLEIVIAPSFSQEALEVLQSKKNLRLLTINIEKATSASKKLTSVQGGLLVQEEDTLSLDESTISIPTKREPSEQEWKDLKLAWKVVKHVKSNAIVLAKDDMTIGVGAGQMNRVGSAKIAITQAGEKAQGSALASDAFFPMPDTLEEAAKAGITAIIQPGGSIRDEDSIKVADTYGIAMVFTGVRHFKH.

Residues 1-145 form the MGS-like domain; the sequence is MKKRALVSVS…KNHKFVSVIV (145 aa).

This sequence belongs to the PurH family.

It carries out the reaction (6R)-10-formyltetrahydrofolate + 5-amino-1-(5-phospho-beta-D-ribosyl)imidazole-4-carboxamide = 5-formamido-1-(5-phospho-D-ribosyl)imidazole-4-carboxamide + (6S)-5,6,7,8-tetrahydrofolate. The enzyme catalyses IMP + H2O = 5-formamido-1-(5-phospho-D-ribosyl)imidazole-4-carboxamide. It participates in purine metabolism; IMP biosynthesis via de novo pathway; 5-formamido-1-(5-phospho-D-ribosyl)imidazole-4-carboxamide from 5-amino-1-(5-phospho-D-ribosyl)imidazole-4-carboxamide (10-formyl THF route): step 1/1. It functions in the pathway purine metabolism; IMP biosynthesis via de novo pathway; IMP from 5-formamido-1-(5-phospho-D-ribosyl)imidazole-4-carboxamide: step 1/1. The chain is Bifunctional purine biosynthesis protein PurH from Bacillus cereus (strain B4264).